The chain runs to 89 residues: Small ribosomal subunit protein uS15 (89 aa).

Belongs to the universal ribosomal protein uS15 family. As to quaternary structure, part of the 30S ribosomal subunit. Forms a bridge to the 50S subunit in the 70S ribosome, contacting the 23S rRNA.

In terms of biological role, one of the primary rRNA binding proteins, it binds directly to 16S rRNA where it helps nucleate assembly of the platform of the 30S subunit by binding and bridging several RNA helices of the 16S rRNA. Functionally, forms an intersubunit bridge (bridge B4) with the 23S rRNA of the 50S subunit in the ribosome. This Thermosynechococcus vestitus (strain NIES-2133 / IAM M-273 / BP-1) protein is Small ribosomal subunit protein uS15.